The primary structure comprises 475 residues: LEC14B homolog (475 aa).

A disordered region spans residues 1–34; the sequence is MSYRTRFGKDNSACDSGNAVEGSGSSKGPNEVSN. The segment covering 23–33 has biased composition (polar residues); it reads SGSSKGPNEVS. WD repeat units lie at residues 211–240, 252–283, 299–329, 375–411, and 423–453; these read DEFGIFSVRFSTDGRELVAASRDASIYVYD, AHSSDVNTVCFADETGHLIYSGSDDNLCKVWD, GHLEGVTFIDSRGDGRYFISNGKDQTTQLWD, GHGVLRTLIRCYLSPAYSTGQKYIYTGSSDHCVYIYD, and HHEGPVRDCSWHPLYPMLVSSSWDGTIARWE.

Belongs to the WD repeat LEC14B family.

The polypeptide is LEC14B homolog (Prunus armeniaca (Apricot)).